Reading from the N-terminus, the 161-residue chain is Probable ribosome biogenesis protein RLP24 (161 aa).

It belongs to the eukaryotic ribosomal protein eL24 family. As to quaternary structure, associated with nucleolar and cytoplasmic pre-60S particles. At the end of biogenesis it dissociates from cytoplasmic pre-60S particles and is likely to be exchanged for its ribosomal homolog, RPL24.

Its subcellular location is the nucleus. The protein resides in the nucleolus. Functionally, involved in the biogenesis of the 60S ribosomal subunit. Ensures the docking of GTPBP4/NOG1 to pre-60S particles. This chain is Probable ribosome biogenesis protein RLP24 (rsl24d1), found in Danio rerio (Zebrafish).